The primary structure comprises 617 residues: Putative metal ion transporter C17A12.14 (617 aa).

The segment at 1 to 141 (MPSNTSRSVP…GKNTRDQPSP (141 aa)) is disordered. S105 carries the phosphoserine modification. Positions 117–136 (SHPEDIQRKEFETENGKNTR) are enriched in basic and acidic residues. Phosphoserine is present on residues S152, S162, S226, and S241. 2 helical membrane passes run 560-580 (TILG…GMNV) and 590-610 (LGWF…SFIL).

This sequence belongs to the CorA metal ion transporter (MIT) (TC 1.A.35) family. Interacts with sad1.

Its subcellular location is the membrane. In Schizosaccharomyces pombe (strain 972 / ATCC 24843) (Fission yeast), this protein is Putative metal ion transporter C17A12.14.